The following is a 71-amino-acid chain: Ranatuerin-2Va (71 aa).

An N-terminal signal peptide occupies residues 1 to 22 (MFTLKKSFLLLFFLGTITLSLC). The propeptide occupies 23–43 (EQERGADEDDGVEMTEEEVKR). A disulfide bond links Cys66 and Cys71.

Expressed by the skin glands.

It localises to the secreted. Its function is as follows. Antimicrobial peptide. The protein is Ranatuerin-2Va of Odorrana versabilis (Chinese bamboo leaf odorous frog).